The following is a 324-amino-acid chain: Zinc transporter ZIP1 (324 aa).

The Extracellular portion of the chain corresponds to 1 to 30 (MGPWGEPELLVWRPEAVASEPSVPVGLEVK). The chain crosses the membrane as a helical span at residues 31-51 (LGALVLLLLLTLICSLVPVCV). The Cytoplasmic segment spans residues 52 to 68 (LRRSGANHEASASGQKA). A helical transmembrane segment spans residues 69-89 (LSLVSCFAGGVFLATCLLDLL). Topologically, residues 90–104 (PDYLAAIDEALEALH) are extracellular. The helical transmembrane segment at 105 to 125 (VTLQFPLQEFILAMGFFLVLV) threads the bilayer. The Cytoplasmic portion of the chain corresponds to 126–179 (MEQITLAYKEQTSPPHPEETRALLGTVNGGPQHWHDGPGIPQAGGTPAAPSALR). A helical membrane pass occupies residues 180 to 200 (ACVLVFSLALHSVFEGLAVGL). The Extracellular portion of the chain corresponds to 201–206 (QRDRAR). The chain crosses the membrane as a helical span at residues 207-227 (AMELCLALLLHKGILAVSLSL). Over 228–237 (RLLQSHLRVQ) the chain is Cytoplasmic. Residues 238–258 (VVAGCGILFSCMTPLGIGLGA) form a helical membrane-spanning segment. Topologically, residues 259-272 (ALAESAGPLHQLAQ) are extracellular. Residues 273 to 293 (SVLEGMAAGTFLYITFLEILP) form a helical membrane-spanning segment. Topologically, residues 294-303 (QELATSEQRI) are cytoplasmic. A helical transmembrane segment spans residues 304–324 (LKVILLLAGFALLTGLLFVQI).

It belongs to the ZIP transporter (TC 2.A.5) family. Ubiquitous, except in the pancreas. Highest levels seen in kidney, salivary gland and placenta.

The protein localises to the cell membrane. It localises to the endoplasmic reticulum membrane. It catalyses the reaction Zn(2+)(in) = Zn(2+)(out). Transporter for the divalent cation Zn(2+). Mediates the influx of Zn(2+) into cells from extracellular space. The chain is Zinc transporter ZIP1 (Slc39a1) from Mus musculus (Mouse).